The primary structure comprises 195 residues: Protein Fer3 (195 aa).

Disordered stretches follow at residues 1 to 24 and 56 to 82; these read MQHP…LWGQ and PLVP…RRRV. Residues 63–75 show a composition bias toward low complexity; the sequence is STNGRANGSSSSS. Positions 86 to 138 constitute a bHLH domain; it reads AQRRAANIRERRRMFNLNEAFDKLRRKVPTFAYEKRLSRIETLRLAITYIGFM. Positions 145–175 are disordered; that stretch reads TPSNSHKSRSDVYGSMNGHHQAPPPAIHPHH.

The protein localises to the nucleus. Functionally, transcription factor that binds to the E-box and functions as inhibitor of transcription. DNA binding requires dimerization with an E protein. Inhibits transcription activation by ASCL1/MASH1 by sequestering E proteins. The protein is Protein Fer3 (fer3) of Drosophila melanogaster (Fruit fly).